The primary structure comprises 675 residues: Neurexin-3b-beta (675 aa).

An N-terminal signal peptide occupies residues 1 to 30 (MRPHFKTRYPQWLSCMLPLVTGCVFGAVWG). Over 31–599 (SNLDSTVVLS…EVIRESSSTT (569 aa)) the chain is Extracellular. The Laminin G-like domain occupies 81-281 (ATYIFGKGGG…HANIKINGSV (201 aa)). Disordered regions lie at residues 313–337 (TTLS…DIVS) and 490–534 (FKPK…MNNR). Over residues 325-335 (SPPTIQTTDDI) the composition is skewed to polar residues. Residues 600–620 (GMVVGIVSAAALCILILLYAM) traverse the membrane as a helical segment. Topologically, residues 621-675 (YKYRNRDEGSYQVDETRNYISNSAQNNGTVVKDKQPSTKGASNKRPKDKDKEYYV) are cytoplasmic. The interval 642 to 675 (NSAQNNGTVVKDKQPSTKGASNKRPKDKDKEYYV) is disordered. Residues 665–675 (RPKDKDKEYYV) show a composition bias toward basic and acidic residues.

Belongs to the neurexin family. Post-translationally, processed by alpha-secretase leading to the formation of an extracellular soluble protein as well as a C-terminal membrane-embedded fragment (CTF). Proteolysis of these CTFs by gamma-secretase releases intracellular domains (ICDs) and extracellular peptides.

The protein resides in the membrane. In terms of biological role, neuronal cell surface protein that may be involved in cell recognition and cell adhesion. This chain is Neurexin-3b-beta (nrxn3b), found in Danio rerio (Zebrafish).